Reading from the N-terminus, the 351-residue chain is Soluble TNF receptor II (351 aa).

The N-terminal stretch at 1 to 19 (MKSVLYSYILFLSCIIING) is a signal peptide. 2 TNFR-Cys repeats span residues 31–67 (KCKD…NTQC) and 69–110 (PCGS…NRIC). Intrachain disulfides connect cysteine 32-cysteine 43, cysteine 44-cysteine 57, cysteine 47-cysteine 67, cysteine 70-cysteine 85, cysteine 88-cysteine 102, and cysteine 92-cysteine 110. 3 N-linked (GlcNAc...) asparagine; by host glycosylation sites follow: asparagine 103, asparagine 191, and asparagine 250.

Belongs to the orthopoxvirus OPG002 family.

It localises to the secreted. Its function is as follows. Inhibits host immune defense by binding to host TNF and various chemokines in the extracellular space. Binds host CC chemokines (beta chemokines) and CXC chemokines (alpha chemokines). The chain is Soluble TNF receptor II (OPG002) from Bos taurus (Bovine).